Here is a 45-residue protein sequence, read N- to C-terminus: Large ribosomal subunit protein bL34 (45 aa).

The protein belongs to the bacterial ribosomal protein bL34 family.

In Streptomyces coelicolor (strain ATCC BAA-471 / A3(2) / M145), this protein is Large ribosomal subunit protein bL34 (rpmH).